Here is a 2103-residue protein sequence, read N- to C-terminus: uncharacterized protein (2103 aa).

The segment covering 1-12 (MSVPGTPGAMEP) has biased composition (low complexity). The disordered stretch occupies residues 1-61 (MSVPGTPGAM…DADDQEEEME (61 aa)). The segment covering 51 to 61 (EDADDQEEEME) has biased composition (acidic residues). The Bromo domain occupies 77–196 (YELQQGYRIL…MMLEQKLALL (120 aa)). Disordered stretches follow at residues 730-750 (AKHK…ITKK), 853-881 (NREL…SIDS), 933-956 (QSKQ…AKLS), 1224-1244 (SASP…TLNG), and 1770-1817 (GATR…STSP). Over residues 865 to 877 (DLGKDSPKGEISK) the composition is skewed to basic and acidic residues. Positions 1224–1234 (SASPTISSTGQ) are enriched in polar residues. A compositionally biased stretch (low complexity) spans 1235 to 1244 (PLSSTTTLNG). Over residues 1773 to 1794 (RSVSISKRQSRTSLQFHSPGIS) the composition is skewed to polar residues. The span at 1795-1808 (TTVPTNVNTNKPQT) shows a compositional bias: low complexity.

It is found in the nucleus. This is an uncharacterized protein from Homo sapiens (Human).